Reading from the N-terminus, the 63-residue chain is Large ribosomal subunit protein uL30 (63 aa).

Belongs to the universal ribosomal protein uL30 family. As to quaternary structure, part of the 50S ribosomal subunit.

The chain is Large ribosomal subunit protein uL30 from Rickettsia akari (strain Hartford).